A 157-amino-acid polypeptide reads, in one-letter code: Phosphopantetheine adenylyltransferase (157 aa).

Substrate is bound at residue Ser9. ATP-binding positions include 9–10 and His17; that span reads SF. Positions 41, 74, and 88 each coordinate substrate. ATP is bound by residues 89–91, Glu99, and 123–129; these read GLR and YTHVSSS.

Belongs to the bacterial CoaD family. In terms of assembly, homohexamer. It depends on Mg(2+) as a cofactor.

The protein resides in the cytoplasm. The enzyme catalyses (R)-4'-phosphopantetheine + ATP + H(+) = 3'-dephospho-CoA + diphosphate. The protein operates within cofactor biosynthesis; coenzyme A biosynthesis; CoA from (R)-pantothenate: step 4/5. Reversibly transfers an adenylyl group from ATP to 4'-phosphopantetheine, yielding dephospho-CoA (dPCoA) and pyrophosphate. This Micrococcus luteus (strain ATCC 4698 / DSM 20030 / JCM 1464 / CCM 169 / CCUG 5858 / IAM 1056 / NBRC 3333 / NCIMB 9278 / NCTC 2665 / VKM Ac-2230) (Micrococcus lysodeikticus) protein is Phosphopantetheine adenylyltransferase.